A 343-amino-acid polypeptide reads, in one-letter code: Programmed cell death protein 2 (343 aa).

Zn(2+) contacts are provided by Cys-134, Cys-137, Cys-145, Cys-148, Cys-154, His-158, His-167, and Cys-171. The MYND-type; atypical zinc finger occupies 134–171; sequence CRVCGCLAPMTCSRCKQAHYCSKEHQTLDWQLGHKQAC.

Post-translationally, ubiquitinated by PRKN, promoting proteasomal degradation.

It is found in the nucleus. May be a DNA-binding protein with a regulatory function. May play an important role in cell death and/or in regulation of cell proliferation. This is Programmed cell death protein 2 (Pdcd2) from Rattus norvegicus (Rat).